Reading from the N-terminus, the 243-residue chain is Ubiquinone/menaquinone biosynthesis C-methyltransferase UbiE (243 aa).

S-adenosyl-L-methionine is bound by residues T69, D90, and 116–117 (DA).

It belongs to the class I-like SAM-binding methyltransferase superfamily. MenG/UbiE family.

It carries out the reaction a 2-demethylmenaquinol + S-adenosyl-L-methionine = a menaquinol + S-adenosyl-L-homocysteine + H(+). The catalysed reaction is a 2-methoxy-6-(all-trans-polyprenyl)benzene-1,4-diol + S-adenosyl-L-methionine = a 5-methoxy-2-methyl-3-(all-trans-polyprenyl)benzene-1,4-diol + S-adenosyl-L-homocysteine + H(+). The protein operates within quinol/quinone metabolism; menaquinone biosynthesis; menaquinol from 1,4-dihydroxy-2-naphthoate: step 2/2. It functions in the pathway cofactor biosynthesis; ubiquinone biosynthesis. Functionally, methyltransferase required for the conversion of demethylmenaquinol (DMKH2) to menaquinol (MKH2) and the conversion of 2-polyprenyl-6-methoxy-1,4-benzoquinol (DDMQH2) to 2-polyprenyl-3-methyl-6-methoxy-1,4-benzoquinol (DMQH2). In Paraburkholderia xenovorans (strain LB400), this protein is Ubiquinone/menaquinone biosynthesis C-methyltransferase UbiE.